We begin with the raw amino-acid sequence, 148 residues long: Large ribosomal subunit protein bL9 (148 aa).

This sequence belongs to the bacterial ribosomal protein bL9 family.

Its function is as follows. Binds to the 23S rRNA. This is Large ribosomal subunit protein bL9 from Dechloromonas aromatica (strain RCB).